Consider the following 830-residue polypeptide: Ribosome biogenesis protein ERB1 (830 aa).

Residues 1–141 (MAPQPLKVGT…ENKDLPVDEK (141 aa)) are disordered. Acidic residues-rich tracts occupy residues 35 to 44 (VSEESDEEFG) and 52 to 109 (MSDD…DSDS). Positions 131–141 (EENKDLPVDEK) are enriched in basic and acidic residues. WD repeat units follow at residues 481–520 (PGDT…EVWR), 523–563 (LHAG…APHI), 660–698 (KTPG…LIRT), 701–740 (SGVK…KPYK), 744–783 (YHNR…DLMQ), and 799–830 (IDGI…LWCS).

Belongs to the WD repeat BOP1/ERB1 family. As to quaternary structure, component of the NOP7 complex, composed of ERB1, NOP7 and YTM1. The complex is held together by ERB1, which interacts with NOP7 via its N-terminal domain and with YTM1 via a high-affinity interaction between the seven-bladed beta-propeller domains of the 2 proteins. The NOP7 complex associates with the 66S pre-ribosome.

Its subcellular location is the nucleus. It localises to the nucleolus. It is found in the nucleoplasm. Functionally, component of the NOP7 complex, which is required for maturation of the 25S and 5.8S ribosomal RNAs and formation of the 60S ribosome. The protein is Ribosome biogenesis protein ERB1 of Cryptococcus neoformans var. neoformans serotype D (strain B-3501A) (Filobasidiella neoformans).